The following is a 436-amino-acid chain: 3-ketoacyl-CoA thiolase (436 aa).

Cys-99 functions as the Acyl-thioester intermediate in the catalytic mechanism. Catalysis depends on proton acceptor residues His-392 and Cys-422.

This sequence belongs to the thiolase-like superfamily. Thiolase family. As to quaternary structure, heterotetramer of two alpha chains (FadJ) and two beta chains (FadI).

It is found in the cytoplasm. It catalyses the reaction an acyl-CoA + acetyl-CoA = a 3-oxoacyl-CoA + CoA. The protein operates within lipid metabolism; fatty acid beta-oxidation. Functionally, catalyzes the final step of fatty acid oxidation in which acetyl-CoA is released and the CoA ester of a fatty acid two carbons shorter is formed. The sequence is that of 3-ketoacyl-CoA thiolase from Escherichia coli O6:H1 (strain CFT073 / ATCC 700928 / UPEC).